The primary structure comprises 79 residues: Sulfur carrier protein TusA (79 aa).

Residue C17 is the Cysteine persulfide intermediate of the active site.

The protein belongs to the sulfur carrier protein TusA family.

It is found in the cytoplasm. In terms of biological role, sulfur carrier protein which probably makes part of a sulfur-relay system. The sequence is that of Sulfur carrier protein TusA from Haemophilus influenzae (strain ATCC 51907 / DSM 11121 / KW20 / Rd).